A 147-amino-acid polypeptide reads, in one-letter code: Nucleoside diphosphate kinase (147 aa).

ATP is bound by residues Lys-11, Phe-59, Arg-87, Thr-93, Arg-104, and Asn-114. His-117 functions as the Pros-phosphohistidine intermediate in the catalytic mechanism.

It belongs to the NDK family. As to quaternary structure, homotetramer. Mg(2+) is required as a cofactor.

Its subcellular location is the cytoplasm. It carries out the reaction a 2'-deoxyribonucleoside 5'-diphosphate + ATP = a 2'-deoxyribonucleoside 5'-triphosphate + ADP. The catalysed reaction is a ribonucleoside 5'-diphosphate + ATP = a ribonucleoside 5'-triphosphate + ADP. Its function is as follows. Major role in the synthesis of nucleoside triphosphates other than ATP. The ATP gamma phosphate is transferred to the NDP beta phosphate via a ping-pong mechanism, using a phosphorylated active-site intermediate. In Anaeromyxobacter dehalogenans (strain 2CP-C), this protein is Nucleoside diphosphate kinase.